The following is a 51-amino-acid chain: Large ribosomal subunit protein eL39 (51 aa).

Belongs to the eukaryotic ribosomal protein eL39 family. Component of the large ribosomal subunit. Interacts with IMPACT.

The protein resides in the cytoplasm. Its function is as follows. RNA-binding component of the large ribosomal subunit. The ribosome is a large ribonucleoprotein complex responsible for the synthesis of proteins in the cell. This is Large ribosomal subunit protein eL39 (Rpl39) from Mus musculus (Mouse).